A 122-amino-acid chain; its full sequence is Guanine nucleotide exchange factor MSS4 homolog (122 aa).

One can recognise an MSS4 domain in the interval 9–120 (EQITDGKNKS…YLALKRVVHK (112 aa)). Zn(2+)-binding residues include cysteine 22, cysteine 25, cysteine 92, and cysteine 95.

Belongs to the DSS4/MSS4 family. As to quaternary structure, interacts with Rab8.

Its subcellular location is the basal cell membrane. Functionally, guanine-nucleotide-releasing protein that acts on members of the sec4/ypt1/rab subfamily such as Rab8. During egg development, essential for establishing and maintaining epithelial cell polarity by regulating the correct polarized deposition of basal membrane (BM) proteins such as trol/Pcan and vkg/Coll IV to the basal surface of follicular epithelial (FE) cells. Likely to function by restricting the activity of the vesicle transport regulator Rab8 to the basal membrane, and thus directs BM protein-containing vesicles to the basal side of the FE cells. This function is independent of the Crag/Rab10 regulation of polarized BM protein secretion in the FE. In Drosophila melanogaster (Fruit fly), this protein is Guanine nucleotide exchange factor MSS4 homolog.